The sequence spans 142 residues: Ribosome-binding factor A (142 aa).

Residues 119–142 are disordered; it reads EAKQKQHGVETDAEQGDTKEEGDK.

This sequence belongs to the RbfA family. In terms of assembly, monomer. Binds 30S ribosomal subunits, but not 50S ribosomal subunits or 70S ribosomes.

It is found in the cytoplasm. Its function is as follows. One of several proteins that assist in the late maturation steps of the functional core of the 30S ribosomal subunit. Associates with free 30S ribosomal subunits (but not with 30S subunits that are part of 70S ribosomes or polysomes). Required for efficient processing of 16S rRNA. May interact with the 5'-terminal helix region of 16S rRNA. The polypeptide is Ribosome-binding factor A (Shewanella pealeana (strain ATCC 700345 / ANG-SQ1)).